We begin with the raw amino-acid sequence, 4116 residues long: Dynein axonemal heavy chain 3 (4116 aa).

Disordered regions lie at residues 1–68 (MGAT…ANEE) and 137–172 (VPRD…KEDS). The segment at 1–1390 (MGATGRLELT…QVQIITTEAL (1390 aa)) is stem. Residues 145 to 156 (GLPSSGNRSSSE) are compositionally biased toward polar residues. A coiled-coil region spans residues 785 to 852 (DLIKRCSEFE…NKEEELLEKE (68 aa)). 4 AAA regions span residues 1391-1612 (YGYE…VLTA), 1672-1903 (KVLN…LHCK), 2036-2284 (KVPA…VIQG), and 2395-2646 (EFNN…LRRH). ATP contacts are provided by residues 1429 to 1436 (GPAGTGKT), 1710 to 1717 (GDPMGGKT), 2074 to 2081 (GPTGTGKS), and 2434 to 2441 (GIGGSGRQ). The tract at residues 2661-2960 (FKTLLNSKRQ…KDLEENIEIC (300 aa)) is stalk. AAA stretches follow at residues 3045–3275 (LGDP…EISE) and 3488–3712 (VREF…QIQM).

It belongs to the dynein heavy chain family. In terms of assembly, consists of at least two heavy chains and a number of intermediate and light chains. As to expression, expressed primarily in trachea and testis, 2 tissues containing axonemal structures. Also expressed in lung.

It is found in the cytoplasm. Its subcellular location is the cytoskeleton. It localises to the cilium axoneme. Its function is as follows. Force generating protein of respiratory cilia. Produces force towards the minus ends of microtubules. Dynein has ATPase activity; the force-producing power stroke is thought to occur on release of ADP. Involved in sperm motility; implicated in sperm flagellar assembly. In Homo sapiens (Human), this protein is Dynein axonemal heavy chain 3 (DNAH3).